A 306-amino-acid polypeptide reads, in one-letter code: Beta-lactamase 1 (306 aa).

Residues 1-43 form the signal peptide; sequence MKNKRMLKIGMCVGILGLSVTSLEAFTGGALQVEAKEKTGQVK. The Acyl-ester intermediate role is filled by serine 89. Glutamate 185 (proton acceptor) is an active-site residue. 251 to 253 contacts substrate; it reads KSG.

The protein belongs to the class-A beta-lactamase family.

It catalyses the reaction a beta-lactam + H2O = a substituted beta-amino acid. Its function is as follows. This protein is a beta-lactamase with a substrate specificity for penicillins. The protein is Beta-lactamase 1 (blaCI) of Bacillus mycoides.